The chain runs to 402 residues: MATIDLDGPALAPPKGEVSNLDDPPNQNCLAYTVLILCAVITTICFLLRAYGRVYLLKKFQTEEILTTLAYGNYWGAAYATFKMVDTPGYFVHQWNVRLKDVIPTNYWILIFGVCYSFVLPFLKIAILVEWCRLFVPKGTRTKSIFWWGCMVIGFVQATSNTAIVVALNMQCNPHEAIWDFRIPGAKCWDLHKLQVASATIHLCCDIAIFLLPQQVIWKLKMSWKKRMGVSVIFGLGLLACVSAAVRLAVTVKYGKAADALYALAPLVFWATAEMTCGFFIVCVPCIPKILKETGVIRNIKRAFGMSTAPTNPNTADRYAKSGTKGSQLSSTGPKSYYKLDEDGVPLGTLKGSESTEYLRGNVNNGQGITRTTQIKITQDNRSTSDSEGHAAFPASQKPWGV.

A run of 5 helical transmembrane segments spans residues 28–48 (NCLAYTVLILCAVITTICFLL), 109–129 (ILIFGVCYSFVLPFLKIAILV), 145–165 (IFWWGCMVIGFVQATSNTAIV), 232–252 (VIFGLGLLACVSAAVRLAVTV), and 264–284 (LAPLVFWATAEMTCGFFIVCV). Disordered regions lie at residues 312–335 (NPNTADRYAKSGTKGSQLSSTGPK) and 378–402 (TQDNRSTSDSEGHAAFPASQKPWGV). A compositionally biased stretch (polar residues) spans 324-334 (TKGSQLSSTGP). Asn-381 carries N-linked (GlcNAc...) asparagine glycosylation.

Belongs to the SAT4 family.

The protein resides in the membrane. Its pathway is secondary metabolite biosynthesis. In terms of biological role, part of the gene cluster that mediates the biosynthesis of the tetraketides fugralins such as linear fugralin A and cyclic fugralin B, volatile compounds that play a role in the asexual reproductive cycle but are not involved in pathogenicity. One of the key features of fugralins is the presence of a double methyl group, which is only rarely encountered in fungal secondary metabolites. As the fugralins cluster does not contain an independent methyltransferase, the PKS FGR1 is probably responsible for adding two methyl groups to the same carbon atom. Fugralin B is similar to fugralin A except for a cyclization between the carboxylic acid C-8 and the alcohol on C-4 resulting in a six membered lactone ring, probably catalyzed by the cyclase FGR4. The exact role of the individual cluster genes remains unknown and further work is needed to unravel the biosynthetic pathway. The protein is Fugralins biosynthesis cluster protein 2 of Gibberella zeae (strain ATCC MYA-4620 / CBS 123657 / FGSC 9075 / NRRL 31084 / PH-1) (Wheat head blight fungus).